The sequence spans 379 residues: Dual-specificity RNA methyltransferase RlmN (379 aa).

Residue E90 is the Proton acceptor of the active site. The Radical SAM core domain occupies 96 to 348 (EPSRGTLCVS…TTVRKTRGDD (253 aa)). Cysteines 103 and 353 form a disulfide. The [4Fe-4S] cluster site is built by C110, C114, and C117. Residues 179–180 (GE), S211, 233–235 (SLH), and N310 each bind S-adenosyl-L-methionine. The active-site S-methylcysteine intermediate is the C353.

The protein belongs to the radical SAM superfamily. RlmN family. The cofactor is [4Fe-4S] cluster.

Its subcellular location is the cytoplasm. It catalyses the reaction adenosine(2503) in 23S rRNA + 2 reduced [2Fe-2S]-[ferredoxin] + 2 S-adenosyl-L-methionine = 2-methyladenosine(2503) in 23S rRNA + 5'-deoxyadenosine + L-methionine + 2 oxidized [2Fe-2S]-[ferredoxin] + S-adenosyl-L-homocysteine. The enzyme catalyses adenosine(37) in tRNA + 2 reduced [2Fe-2S]-[ferredoxin] + 2 S-adenosyl-L-methionine = 2-methyladenosine(37) in tRNA + 5'-deoxyadenosine + L-methionine + 2 oxidized [2Fe-2S]-[ferredoxin] + S-adenosyl-L-homocysteine. In terms of biological role, specifically methylates position 2 of adenine 2503 in 23S rRNA and position 2 of adenine 37 in tRNAs. m2A2503 modification seems to play a crucial role in the proofreading step occurring at the peptidyl transferase center and thus would serve to optimize ribosomal fidelity. In Nitrosomonas europaea (strain ATCC 19718 / CIP 103999 / KCTC 2705 / NBRC 14298), this protein is Dual-specificity RNA methyltransferase RlmN.